The chain runs to 274 residues: 2,3,4,5-tetrahydropyridine-2,6-dicarboxylate N-succinyltransferase (274 aa).

Belongs to the transferase hexapeptide repeat family.

Its subcellular location is the cytoplasm. The catalysed reaction is (S)-2,3,4,5-tetrahydrodipicolinate + succinyl-CoA + H2O = (S)-2-succinylamino-6-oxoheptanedioate + CoA. It functions in the pathway amino-acid biosynthesis; L-lysine biosynthesis via DAP pathway; LL-2,6-diaminopimelate from (S)-tetrahydrodipicolinate (succinylase route): step 1/3. This is 2,3,4,5-tetrahydropyridine-2,6-dicarboxylate N-succinyltransferase from Escherichia coli (strain SMS-3-5 / SECEC).